A 373-amino-acid chain; its full sequence is Putative F-box/kelch-repeat protein At5g24040 (373 aa).

One can recognise an F-box domain in the interval 2-50 (VKWSELPPEILHLISLKIDNPFDLIHFRSVCSFWRSSSLLKFRHMTSLR). Kelch repeat units lie at residues 165-207 (NEYM…PFKG) and 262-308 (YDFH…CTFS).

The polypeptide is Putative F-box/kelch-repeat protein At5g24040 (Arabidopsis thaliana (Mouse-ear cress)).